The sequence spans 95 residues: Co-chaperonin GroES (95 aa).

Belongs to the GroES chaperonin family. Heptamer of 7 subunits arranged in a ring. Interacts with the chaperonin GroEL.

The protein resides in the cytoplasm. Functionally, together with the chaperonin GroEL, plays an essential role in assisting protein folding. The GroEL-GroES system forms a nano-cage that allows encapsulation of the non-native substrate proteins and provides a physical environment optimized to promote and accelerate protein folding. GroES binds to the apical surface of the GroEL ring, thereby capping the opening of the GroEL channel. The polypeptide is Co-chaperonin GroES (Rickettsia felis (strain ATCC VR-1525 / URRWXCal2) (Rickettsia azadi)).